Reading from the N-terminus, the 526-residue chain is Exodeoxyribonuclease 7 large subunit (526 aa).

The interval 496–526 (GAMTTEGGTPPAGAKKRSAKPADPTKQGSLF) is disordered.

The protein belongs to the XseA family. Heterooligomer composed of large and small subunits.

Its subcellular location is the cytoplasm. It carries out the reaction Exonucleolytic cleavage in either 5'- to 3'- or 3'- to 5'-direction to yield nucleoside 5'-phosphates.. In terms of biological role, bidirectionally degrades single-stranded DNA into large acid-insoluble oligonucleotides, which are then degraded further into small acid-soluble oligonucleotides. The chain is Exodeoxyribonuclease 7 large subunit from Rhizobium etli (strain CIAT 652).